The chain runs to 316 residues: MSSQLEQLKAYTTVVADTGDFKQIAAFAPRDATTNPSLILKAVSQPAYAPLLAQTAAAHRGQPLDAIVDRVLVRFGCEILNVVPGRVSTEVDARLSFDAAATVARAQRIMALYESEGIARERVLIKIAATWEGIQAAKALEHHGIHCNLTLLFAFCQAVACGESGVRLISPFVGRIHDWHKKAAGARWDEAANAGANDPGVKSVAQIWRYFRKFGIETEVMGASFRNTGQILALAGCDLLTISPELLAQLQASEATVMRALDVDAALHCDAKALSFNEASFRYALNEDAMATEKLAEGIRAFAVDAAQLDRLIQAL.

The Schiff-base intermediate with substrate role is filled by K126.

It belongs to the transaldolase family. Type 1 subfamily. In terms of assembly, homodimer.

It is found in the cytoplasm. It catalyses the reaction D-sedoheptulose 7-phosphate + D-glyceraldehyde 3-phosphate = D-erythrose 4-phosphate + beta-D-fructose 6-phosphate. The protein operates within carbohydrate degradation; pentose phosphate pathway; D-glyceraldehyde 3-phosphate and beta-D-fructose 6-phosphate from D-ribose 5-phosphate and D-xylulose 5-phosphate (non-oxidative stage): step 2/3. Its function is as follows. Transaldolase is important for the balance of metabolites in the pentose-phosphate pathway. The protein is Transaldolase of Methylibium petroleiphilum (strain ATCC BAA-1232 / LMG 22953 / PM1).